The sequence spans 225 residues: tRNA (guanine-N(1)-)-methyltransferase (225 aa).

Residues Gly112 and Ile132 to Leu137 contribute to the S-adenosyl-L-methionine site.

Belongs to the RNA methyltransferase TrmD family. As to quaternary structure, homodimer.

The protein resides in the cytoplasm. The catalysed reaction is guanosine(37) in tRNA + S-adenosyl-L-methionine = N(1)-methylguanosine(37) in tRNA + S-adenosyl-L-homocysteine + H(+). Specifically methylates guanosine-37 in various tRNAs. The sequence is that of tRNA (guanine-N(1)-)-methyltransferase from Porphyromonas gingivalis (strain ATCC BAA-308 / W83).